The primary structure comprises 448 residues: Beta-glucosidase A (448 aa).

The active-site Proton donor is Glu166. Glu352 acts as the Nucleophile in catalysis.

The protein belongs to the glycosyl hydrolase 1 family. As to quaternary structure, homooctamer.

The enzyme catalyses Hydrolysis of terminal, non-reducing beta-D-glucosyl residues with release of beta-D-glucose.. In terms of biological role, bglA is intracellular and cleaves cellobiose probably through inorganic phosphate mediated hydrolysis. This is Beta-glucosidase A (bglA) from Paenibacillus polymyxa (Bacillus polymyxa).